A 298-amino-acid polypeptide reads, in one-letter code: Mitochondrial distribution and morphology protein 12 (298 aa).

The 298-residue stretch at 1-298 (MSIELDWTGL…VYPHFYTLYL (298 aa)) folds into the SMP-LTD domain. The disordered stretch occupies residues 118 to 142 (SEHEESLSRWSDTESETGTCDSSSL). A compositionally biased stretch (polar residues) spans 133–142 (ETGTCDSSSL).

This sequence belongs to the MDM12 family. In terms of assembly, component of the ER-mitochondria encounter structure (ERMES) or MDM complex, composed of MMM1, MDM10, MDM12 and MDM34. An MMM1 homodimer associates with one molecule of MDM12 on each side in a pairwise head-to-tail manner, and the SMP-LTD domains of MMM1 and MDM12 generate a continuous hydrophobic tunnel for phospholipid trafficking.

The protein resides in the mitochondrion outer membrane. The protein localises to the endoplasmic reticulum membrane. In terms of biological role, component of the ERMES/MDM complex, which serves as a molecular tether to connect the endoplasmic reticulum (ER) and mitochondria. Components of this complex are involved in the control of mitochondrial shape and protein biogenesis, and function in nonvesicular lipid trafficking between the ER and mitochondria. MDM12 is required for the interaction of the ER-resident membrane protein MMM1 and the outer mitochondrial membrane-resident beta-barrel protein MDM10. The MDM12-MMM1 subcomplex functions in the major beta-barrel assembly pathway that is responsible for biogenesis of all mitochondrial outer membrane beta-barrel proteins, and acts in a late step after the SAM complex. The MDM10-MDM12-MMM1 subcomplex further acts in the TOM40-specific pathway after the action of the MDM12-MMM1 complex. Essential for establishing and maintaining the structure of mitochondria and maintenance of mtDNA nucleoids. The polypeptide is Mitochondrial distribution and morphology protein 12 (Malassezia globosa (strain ATCC MYA-4612 / CBS 7966) (Dandruff-associated fungus)).